The primary structure comprises 113 residues: uncharacterized protein (113 aa).

The segment at 16 to 96 (LVDNETRCFH…STVHCKYCNH (81 aa)) adopts a CHY-type; degenerate zinc-finger fold. Zn(2+)-binding residues include cysteine 23, histidine 25, cysteine 46, cysteine 49, cysteine 73, cysteine 76, cysteine 91, and cysteine 94.

The protein resides in the cytoplasm. It is found in the nucleus. This is an uncharacterized protein from Schizosaccharomyces pombe (strain 972 / ATCC 24843) (Fission yeast).